The primary structure comprises 128 residues: Small ribosomal subunit protein bS6 (128 aa).

The disordered stretch occupies residues 100-128 (SPMAKAKEERFTRRDDERREEATEAASEE). The span at 104 to 121 (KAKEERFTRRDDERREEA) shows a compositional bias: basic and acidic residues.

Belongs to the bacterial ribosomal protein bS6 family.

Its function is as follows. Binds together with bS18 to 16S ribosomal RNA. The chain is Small ribosomal subunit protein bS6 from Aeromonas hydrophila subsp. hydrophila (strain ATCC 7966 / DSM 30187 / BCRC 13018 / CCUG 14551 / JCM 1027 / KCTC 2358 / NCIMB 9240 / NCTC 8049).